The following is a 224-amino-acid chain: UPF0758 protein PSHAa2643 (224 aa).

The 123-residue stretch at Ile102 to Ile224 folds into the MPN domain. The Zn(2+) site is built by His173, His175, and Asp186. A JAMM motif motif is present at residues His173–Asp186.

The protein belongs to the UPF0758 family.

This Pseudoalteromonas translucida (strain TAC 125) protein is UPF0758 protein PSHAa2643.